The following is a 181-amino-acid chain: Acireductone dioxygenase (181 aa).

Residues His-97, His-99, Glu-103, and His-141 each contribute to the Fe(2+) site. 4 residues coordinate Ni(2+): His-97, His-99, Glu-103, and His-141.

Belongs to the acireductone dioxygenase (ARD) family. As to quaternary structure, monomer. The cofactor is Fe(2+). Ni(2+) serves as cofactor.

It carries out the reaction 1,2-dihydroxy-5-(methylsulfanyl)pent-1-en-3-one + O2 = 3-(methylsulfanyl)propanoate + CO + formate + 2 H(+). It catalyses the reaction 1,2-dihydroxy-5-(methylsulfanyl)pent-1-en-3-one + O2 = 4-methylsulfanyl-2-oxobutanoate + formate + 2 H(+). It functions in the pathway amino-acid biosynthesis; L-methionine biosynthesis via salvage pathway; L-methionine from S-methyl-5-thio-alpha-D-ribose 1-phosphate: step 5/6. In terms of biological role, catalyzes 2 different reactions between oxygen and the acireductone 1,2-dihydroxy-3-keto-5-methylthiopentene (DHK-MTPene) depending upon the metal bound in the active site. Fe-containing acireductone dioxygenase (Fe-ARD) produces formate and 2-keto-4-methylthiobutyrate (KMTB), the alpha-ketoacid precursor of methionine in the methionine recycle pathway. Ni-containing acireductone dioxygenase (Ni-ARD) produces methylthiopropionate, carbon monoxide and formate, and does not lie on the methionine recycle pathway. This is Acireductone dioxygenase from Pseudomonas fluorescens (strain ATCC BAA-477 / NRRL B-23932 / Pf-5).